A 975-amino-acid chain; its full sequence is MKKMLFMNKKEKKEEQSPAHSSLAQQHQLAQQQYQLQQQQLQLQYQQHQQQLQLAQQQKQNEQNLAQLSTSTSSNSSVNNTTNTNTNTTNSSSISSNNNNNNNTAVPILKAHDFCGTIMILGHTESGKTTLQRQLEFIYGVTDPTDAKHYQRLIYGNTLATLIRFIENSERLNITLSPDNLARVKRIQSQPVELARNRLPRFPLKLGWDCKCIWEDKVIQSVYNHSKICSEIRTPGRPKYYMDRMFKVFDPSYTPTEMDIISAYDQKDTIQSSAIIHKRFKVDLFGCSGKQSSPKNWVGLHQNYKPNYIFYVVALKDYFSDHLVATQNTDPTIVEMCNNHIHRNLLLESLNSFETLTKSELFDKSLAIYLIFNTSDIFYENIKQYDLKSCFSEYEGGNDPEKAVSFISNKFTKFLQNKDKPYKSHIVNLLDKNNVREEFEGIFDSLKIDAEKRGFTTPYNQSNSSPVSSIGSNSSRNSRLPNTSVSIPGLYSSDNDNTRLKNVNNNNNNNNNTTTYGSSTFPSSVISTTGSISNSIASAMDNDSSYSNESSPTSSMTLLPTTTTTTTTTTTTATTTDSTNNNNNNATVVIGKGKPPKEPKPVKPPKEPKPPKEPKPPKEPKPPKEPKPIKEPKEKPVKESKPPKEPKPIKEPKESKEPKEPKEPKPTKPPKEKKTSKVDGAAESKKNGADSCGNGGVGSKIKLESGFGSLQGRRKNMEDTHVILNNLMGAVTYNGPPKDIPISYYAVYDGHGGTETSTLLEPTVHNCLVNSQSFRDGDYEQAFRDAYAEADDIVIEKCEKSGSTGVSALLVGNKLYTANVGDSEIVLARAQPNANPKGPVTYEPVLLSYKHLASDDQEKKRVTDLGGMIIFNRLFGSLAVSRSFGDKEYKEGEKKFCVSDPYQTTTDLTARDHFFILACDGLWDKVEYDEAVQFVQRNIKLGKSATEISELLAQDSYDRGSGDNITVLVVILNWN.

Disordered stretches follow at residues 1-31 (MKKMLFMNKKEKKEEQSPAHSSLAQQHQLAQ) and 64-99 (NLAQLSTSTSSNSSVNNTTNTNTNTTNSSSISSNNN). The segment covering 8–17 (NKKEKKEEQS) has biased composition (basic and acidic residues). Residues 21–70 (SSLAQQHQLAQQQYQLQQQQLQLQYQQHQQQLQLAQQQKQNEQNLAQLST) adopt a coiled-coil conformation. The 345-residue stretch at 114 to 458 (FCGTIMILGH…DAEKRGFTTP (345 aa)) folds into the G-alpha domain. Residues 117-130 (TIMILGHTESGKTT) form a G1 motif region. GTP contacts are provided by residues 122–129 (GHTESGKT), 261–267 (ISAYDQK), 286–290 (GCSGK), and 373–376 (NTSD). The G2 motif stretch occupies residues 259–267 (DIISAYDQK). The segment at 282 to 291 (VDLFGCSGKQ) is G3 motif. Positions 369–376 (YLIFNTSD) are G4 motif. The G5 motif stretch occupies residues 427 to 432 (VNLLDK). Disordered stretches follow at residues 455-520 (FTTP…GSST) and 541-700 (DNDS…VGSK). Low complexity-rich tracts occupy residues 460–478 (NQSNSSPVSSIGSNSSRNS), 500–515 (LKNVNNNNNNNNNTTT), and 544–587 (SSYS…NNAT). Residues 595 to 688 (PPKEPKPVKP…DGAAESKKNG (94 aa)) are compositionally biased toward basic and acidic residues. The PPM-type phosphatase domain occupies 704 to 972 (ESGFGSLQGR…DNITVLVVIL (269 aa)). D749, G750, D920, and D963 together coordinate Mn(2+).

It in the N-terminal section; belongs to the G-alpha family. This sequence in the C-terminal section; belongs to the PP2C family. As to quaternary structure, g proteins are composed of 3 units; alpha, beta and gamma. The alpha chain contains the guanine nucleotide binding site. Mg(2+) serves as cofactor. The cofactor is Mn(2+).

Its subcellular location is the cytoplasm. The protein localises to the cytosol. The protein resides in the cell membrane. It carries out the reaction O-phospho-L-seryl-[protein] + H2O = L-seryl-[protein] + phosphate. The enzyme catalyses O-phospho-L-threonyl-[protein] + H2O = L-threonyl-[protein] + phosphate. Inhibited by 50 mM NaF (sodium fluoride). In terms of biological role, involved in cell-type differentiation and morphogenesis. Dephosphorylates casein; in vitro. May also be involved as modulators or transducers in various transmembrane signaling systems. The chain is Protein spalten (spnA) from Dictyostelium discoideum (Social amoeba).